A 139-amino-acid polypeptide reads, in one-letter code: Putative nickel-responsive regulator (139 aa).

Ni(2+) contacts are provided by H79, H90, H92, and C98.

Belongs to the transcriptional regulatory CopG/NikR family. Ni(2+) serves as cofactor.

Its function is as follows. Transcriptional regulator. The chain is Putative nickel-responsive regulator from Pelobacter propionicus (strain DSM 2379 / NBRC 103807 / OttBd1).